Consider the following 312-residue polypeptide: Probable deoxyhypusine synthase (312 aa).

Catalysis depends on K285, which acts as the Nucleophile.

It belongs to the deoxyhypusine synthase family. NAD(+) is required as a cofactor.

It catalyses the reaction [eIF5A protein]-L-lysine + spermidine = [eIF5A protein]-deoxyhypusine + propane-1,3-diamine. It participates in protein modification; eIF5A hypusination. Catalyzes the NAD-dependent oxidative cleavage of spermidine and the subsequent transfer of the butylamine moiety of spermidine to the epsilon-amino group of a specific lysine residue of the eIF-5A precursor protein to form the intermediate deoxyhypusine residue. The sequence is that of Probable deoxyhypusine synthase from Saccharolobus islandicus (strain M.16.4 / Kamchatka #3) (Sulfolobus islandicus).